A 172-amino-acid chain; its full sequence is Transcriptional regulator TAC1 (172 aa).

A disordered region spans residues 1–28 (MENIKNPKNADDCSDSISKNSHQGVDDS). Residues 15-28 (DSISKNSHQGVDDS) show a composition bias toward polar residues. A C2H2-type zinc finger spans residues 35–57 (YVCSFCIRGFSNAQALGGHMNIH). The EAR-like (transcriptional repression) signature appears at 156 to 160 (LDLEL).

In terms of tissue distribution, preferentially expressed in roots and flowers. Slightly expressed in leaves and stems.

Its subcellular location is the nucleus. Functionally, activation factor which mediates telomerase activity and potentiates responses to auxin through the regulation of BT2. Binds in vitro to the DNA sequence 5'-GACAGTGTTAC-3' of the BT2 promoter. The chain is Transcriptional regulator TAC1 (TAC1) from Arabidopsis thaliana (Mouse-ear cress).